The following is a 644-amino-acid chain: Biosynthetic arginine decarboxylase (644 aa).

Lys100 carries the N6-(pyridoxal phosphate)lysine modification. 282–292 (CDVGGGLAIDY) is a binding site for substrate.

The protein belongs to the Orn/Lys/Arg decarboxylase class-II family. SpeA subfamily. Requires Mg(2+) as cofactor. Pyridoxal 5'-phosphate serves as cofactor.

The catalysed reaction is L-arginine + H(+) = agmatine + CO2. Functionally, catalyzes the biosynthesis of agmatine from arginine. The protein is Biosynthetic arginine decarboxylase of Gloeobacter violaceus (strain ATCC 29082 / PCC 7421).